A 230-amino-acid polypeptide reads, in one-letter code: D-glycero-alpha-D-manno-heptose 1-phosphate guanylyltransferase (230 aa).

It belongs to the D-alpha-D-heptose-1-P guanylyltransferase family.

The enzyme catalyses D-glycero-alpha-D-manno-heptose 1-phosphate + GTP + H(+) = GDP-D-glycero-alpha-D-manno-heptose + diphosphate. Its pathway is nucleotide-sugar biosynthesis; GDP-D-glycero-alpha-D-manno-heptose biosynthesis; GDP-D-glycero-alpha-D-manno-heptose from D-glycero-alpha-D-manno-heptose 7-phosphate: step 3/3. It functions in the pathway cell surface structure biogenesis; S-layer biogenesis. Functionally, catalyzes the GDP transfer from GTP to D-glycero-alpha-D-manno-heptose 1-phosphate, yielding GDP-D-alpha-D-heptose. Cannot use ATP, CTP, dTTP or UTP as substrate. This chain is D-glycero-alpha-D-manno-heptose 1-phosphate guanylyltransferase (hddC), found in Aneurinibacillus thermoaerophilus.